Reading from the N-terminus, the 875-residue chain is MTIERYNPRAQEQKWQAIWDEKKIFQTSHEDEGEKYYVLEMFPYPSGRIHMGHVRNYTMGDVVARYKRAKGMNVLHPMGWDAFGMPAENAAMQNKVHPKAWTYQNIAAMRKQLQKLGLSIDWSREFATCDVDYYHRQQMIFLDLYQKGLVVRKVAKVNWDPVDQTVLANEQVIDGRGWRSGALVEQRELTQWFFKITEFGEGLLARLDDLTEWPDKVRVMQKNWIGKSQGLYIRWALDKTQLPHNDGCEGFDEITCYSTRPDTLFGASFLALSVDHPVAQALARNDEELRAFIEMCRCGSTTTEALETAEKQGFRTGVLAVHPLNPAVRLPVYIANFVLMDYGTGAIFGCPAHDQRDLDFARKYDLPVQIVVAPKEAEEQDFTLSDTAYTGDGVMINSDFLNGLTPKDAFEVVAQHLEKQVLNGQPQGQKTVQFRLRDWGVSRQRYWGCPIPMIHCAACGVVPVPRADLPVVLPEDVTFDRPGNPLARHETWQTVACPSCGQPAKRETDTMDTFVDSSWYYARFTAPWAQEPTDQDIAAQWLPVQQYIGGIEHAILHLLYARFFMRAMKLAGHVNADEPFTGLFTQGMVVHETYRDAQGWVAPDEVSIVEQDGKRRAYKLTDQSEVTIGSIEKMSKSKKNVVDPDDIISSYGADTARWFMLSDSPPERDVIWSESGIEGAHRFVQRVWRCVALSAPILSTIEPCAGHQGEALELSKAAHRTLCAVEDDLEKLAFNRAVARLYEFLNIMAPLLNTVADLDDEMKSALRQAMDFFCAMIAPMMPHLAEECHAALGGKTLMSECAWPVYDKALIVEDSVTLPVQINGKKRGDVTVPVTADQAEIEQAVLALSFVQAQLAGKSVKKMIIVPKRIVNVVL.

Residues 43–53 (PYPSGRIHMGH) carry the 'HIGH' region motif. The 'KMSKS' region signature appears at 633 to 637 (KMSKS). Residue K636 participates in ATP binding.

The protein belongs to the class-I aminoacyl-tRNA synthetase family.

The protein resides in the cytoplasm. The enzyme catalyses tRNA(Leu) + L-leucine + ATP = L-leucyl-tRNA(Leu) + AMP + diphosphate. The polypeptide is Leucine--tRNA ligase (Bartonella bacilliformis (strain ATCC 35685 / KC583 / Herrer 020/F12,63)).